A 219-amino-acid polypeptide reads, in one-letter code: Uracil-DNA glycosylase (219 aa).

The active-site Proton acceptor is D61.

This sequence belongs to the uracil-DNA glycosylase (UDG) superfamily. UNG family.

The protein localises to the cytoplasm. The catalysed reaction is Hydrolyzes single-stranded DNA or mismatched double-stranded DNA and polynucleotides, releasing free uracil.. Excises uracil residues from the DNA which can arise as a result of misincorporation of dUMP residues by DNA polymerase or due to deamination of cytosine. This is Uracil-DNA glycosylase from Neisseria gonorrhoeae (strain ATCC 700825 / FA 1090).